The sequence spans 179 residues: MEVLREKYIKEVVPAMMRKFGYKNPMAVPKIEKIVVNIGVSEAVQNPGAIEAAARDLAIITGQKPIVRKARKSIANFHLRKGMPIGLKVTLRGERMYAFLYKLINLALPRVRDFSGVSPNSFDGRGNYSLGLKEQLVFPEIEYDKIDRIRGMDITIVTTAKTDEEAKELLALLGMPFKK.

Belongs to the universal ribosomal protein uL5 family. As to quaternary structure, part of the 50S ribosomal subunit; part of the 5S rRNA/L5/L18/L25 subcomplex. Contacts the 5S rRNA and the P site tRNA. Forms a bridge to the 30S subunit in the 70S ribosome.

This is one of the proteins that bind and probably mediate the attachment of the 5S RNA into the large ribosomal subunit, where it forms part of the central protuberance. In the 70S ribosome it contacts protein S13 of the 30S subunit (bridge B1b), connecting the 2 subunits; this bridge is implicated in subunit movement. Contacts the P site tRNA; the 5S rRNA and some of its associated proteins might help stabilize positioning of ribosome-bound tRNAs. The protein is Large ribosomal subunit protein uL5 of Dictyoglomus turgidum (strain DSM 6724 / Z-1310).